Here is a 137-residue protein sequence, read N- to C-terminus: Methylglyoxal synthase (137 aa).

An MGS-like domain is found at 1–137 (MKIALIAHDK…DLLRGEEPNV (137 aa)). Substrate contacts are provided by residues His-8, Lys-12, 34-37 (TGTT), and 54-55 (SG). Asp-60 acts as the Proton donor/acceptor in catalysis. His-87 contacts substrate.

The protein belongs to the methylglyoxal synthase family.

It carries out the reaction dihydroxyacetone phosphate = methylglyoxal + phosphate. In terms of biological role, catalyzes the formation of methylglyoxal from dihydroxyacetone phosphate. This chain is Methylglyoxal synthase, found in Bacillus subtilis (strain 168).